The chain runs to 431 residues: Enolase (431 aa).

(2R)-2-phosphoglycerate is bound at residue Q166. Residue E208 is the Proton donor of the active site. The Mg(2+) site is built by D245, E288, and D315. Positions 340, 369, 370, and 391 each coordinate (2R)-2-phosphoglycerate. The active-site Proton acceptor is the K340.

Belongs to the enolase family. The cofactor is Mg(2+).

It localises to the cytoplasm. The protein resides in the secreted. The protein localises to the cell surface. The enzyme catalyses (2R)-2-phosphoglycerate = phosphoenolpyruvate + H2O. The protein operates within carbohydrate degradation; glycolysis; pyruvate from D-glyceraldehyde 3-phosphate: step 4/5. Functionally, catalyzes the reversible conversion of 2-phosphoglycerate (2-PG) into phosphoenolpyruvate (PEP). It is essential for the degradation of carbohydrates via glycolysis. The chain is Enolase from Clostridium perfringens (strain 13 / Type A).